Reading from the N-terminus, the 621-residue chain is Growth factor receptor-bound protein 10 (621 aa).

Composition is skewed to polar residues over residues 1–23 (MNNDINSSVESLNSACNMQSDTD) and 33–59 (HASNQGAASSSRGQPQASPRQKMQRSQ). The interval 1–118 (MNNDINSSVE…PSQPPAKHCG (118 aa)) is disordered. 2 positions are modified to phosphoserine: S50 and S96. Over residues 95–112 (GSPPSVAPSSLPPPPSQP) the composition is skewed to pro residues. One can recognise a Ras-associating domain in the interval 194–278 (LRKDVKVFSE…SKFLFRKNYA (85 aa)). One can recognise a PH domain in the interval 318 to 427 (CPEIQGFLQV…WMTAFRLLKY (110 aa)). Residue S455 is modified to Phosphoserine; by MTOR and PKB/AKT1. S458 and S503 each carry phosphoserine. The SH2 domain occupies 520–601 (WFHGRISREE…SDLIQLVDFY (82 aa)).

This sequence belongs to the GRB7/10/14 family. As to quaternary structure, interacts with ligand-activated tyrosine kinase receptors, including FGFR1, INSR, IGF1R, MET and PDGFRB in a phosphotyrosine-dependent manner through the SH2 domain. Poorly binds to the EGFR. Directly interacts with MAP3K14/NIK and is recruited to the EGFR-ERBB2 complex. Interacts with GIGYF1/PERQ1 and GIGYF2/TNRC15. When unphosphorylated, interacts with AKT1 and when phosphorylated with YWHAE/14-3-3 epsilon. Interacts with NEDD4. Interacts with LRP6, thus interfering with the binding of AXIN1 to LRP6. Binds to activated NRAS. Phosphorylated on serine residues upon EGF, FGF and PDGF stimulation. Widely expressed.

Its subcellular location is the cytoplasm. With respect to regulation, phosphorylation by mTORC1 stabilizes and activates GRB10 constituting a feedback pathway by which mTORC1 inhibits INSR-dependent signaling. In terms of biological role, adapter protein which modulates coupling of a number of cell surface receptor kinases with specific signaling pathways. Binds to, and suppress signals from, activated receptors tyrosine kinases, including the insulin (INSR) and insulin-like growth factor (IGF1R) receptors. The inhibitory effect can be achieved by 2 mechanisms: interference with the signaling pathway and increased receptor degradation. Delays and reduces AKT1 phosphorylation in response to insulin stimulation. Blocks association between INSR and IRS1 and IRS2 and prevents insulin-stimulated IRS1 and IRS2 tyrosine phosphorylation. Recruits NEDD4 to IGF1R, leading to IGF1R ubiquitination, increased internalization and degradation by both the proteasomal and lysosomal pathways. A similar role in the mediation of ubiquitination also has been suggested with INSR. Negatively regulates Wnt signaling by interacting with LRP6 intracellular portion and interfering with the binding of AXIN1 to LRP6. Positive regulator of the KDR/VEGFR-2 signaling pathway. May inhibit NEDD4-mediated degradation of KDR/VEGFR-2. The polypeptide is Growth factor receptor-bound protein 10 (Grb10) (Mus musculus (Mouse)).